Here is an 88-residue protein sequence, read N- to C-terminus: HssA/B-like protein 64 (88 aa).

Residues Met-1–Phe-24 show a composition bias toward low complexity. Disordered stretches follow at residues Met-1–Gly-25 and Gly-45–Cys-88. Residues Ala-56–Gly-66 are compositionally biased toward gly residues.

This sequence belongs to the hssA/B family.

The protein is HssA/B-like protein 64 (hssl64) of Dictyostelium discoideum (Social amoeba).